A 1087-amino-acid polypeptide reads, in one-letter code: Voltage-gated inwardly rectifying potassium channel KCNH3 (1087 aa).

Residues 1–228 (MPAMRGLLAP…HCGALRATWD (228 aa)) lie on the Cytoplasmic side of the membrane. The region spanning 18 to 90 (IATRFDGTHS…QQIRKALDEH (73 aa)) is the PAS domain. The region spanning 93–145 (FKAELILYRKSGLPFWCLLDVIPIKNEKGEVALFLVSHKDISETKNRGGPDNW) is the PAC domain. A compositionally biased stretch (basic and acidic residues) spans 137-150 (KNRGGPDNWKERGG). The segment at 137–161 (KNRGGPDNWKERGGGRRRYGRAGSK) is disordered. The helical transmembrane segment at 229 to 249 (GFILLATLYVAVTVPYSVCVS) threads the bilayer. At 250 to 259 (TAREPSAARG) the chain is on the extracellular side. The chain crosses the membrane as a helical span at residues 260 to 280 (PPSVCDLAVEVLFILDIVLNF). The Cytoplasmic portion of the chain corresponds to 281 to 302 (RTTFVSKSGQVVFAPKSICLHY). The chain crosses the membrane as a helical span at residues 303–323 (VTTWFLLDVIAALPFDLLHAF). Residues 324–331 (KVNVYVGA) lie on the Extracellular side of the membrane. A helical; Voltage-sensor membrane pass occupies residues 332–352 (HLLKTVRLLRLLRLLPRLDRY). Residues 353–361 (SQYSAVVLT) are Cytoplasmic-facing. Residues 362–382 (LLMAVFALLAHWVACVWFYIG) traverse the membrane as a helical segment. Topologically, residues 383–456 (QQEIENSESE…GGPSLRSAYI (74 aa)) are extracellular. Residues 416–436 (SPDGGNSSGQSENCSSSGGGS) are disordered. Residues 419–431 (GGNSSGQSENCSS) show a composition bias toward low complexity. 3 N-linked (GlcNAc...) asparagine glycosylation sites follow: Asn-421, Asn-428, and Asn-439. The pore-forming intramembrane region spans 457-477 (TSLYFALSSLTSVGFGNVSAN). The Selectivity filter motif lies at 468–473 (SVGFGN). The Extracellular segment spans residues 478–482 (TDTEK). A helical transmembrane segment spans residues 483 to 503 (IFSICTMLIGALMHAVVFGNV). Residues 504–1087 (TAIIQRMYAR…QWTQEEGTGV (584 aa)) lie on the Cytoplasmic side of the membrane. 585–700 (LFEAASRGCL…FAPRFSRGLR (116 aa)) provides a ligand contact to a nucleoside 3',5'-cyclic phosphate. Disordered regions lie at residues 733 to 813 (EKET…LQLP) and 975 to 1061 (LMAP…PWDP). Over residues 776 to 788 (TAPRPRLGGRGRP) the composition is skewed to basic residues.

Belongs to the potassium channel family. H (Eag) (TC 1.A.1.20) subfamily. Kv12.2/KCNH3 sub-subfamily. As to quaternary structure, the potassium channel is probably composed of a homo- or heterotetrameric complex of pore-forming alpha subunits that can associate with modulating beta subunits. Interacts with KCNE1 and KCNE3; these interactions regulate KCNH3 trafficking to the plasma membrane and its subsequent voltage-gated potassium channel activity. Post-translationally, N-glycosylated. N-glycosylation mediates traffick to the cell membrane but is not necessary for voltage-gated potassium channel activity. Highly expressed in adult and embryonic brain, in particular in cerebellum, brain stem, hippocampus, cortex and striatum. Also found in pituitary.

The protein resides in the cell membrane. It carries out the reaction K(+)(in) = K(+)(out). Functionally, pore-forming (alpha) subunit of a voltage-gated inwardly rectifying potassium channel. Charactherized by a fast rate of activation during depolarization followed by a rapid inactivation at much more depolarized value causing inward rectification due to a C-type inactivation mechanism. Exhibits a rapid recovery from inactivation. The polypeptide is Voltage-gated inwardly rectifying potassium channel KCNH3 (Rattus norvegicus (Rat)).